Reading from the N-terminus, the 195-residue chain is Glycerol-3-phosphate acyltransferase (195 aa).

Helical transmembrane passes span 2-22 (IFFSILITIFAYFLGSISSAI), 54-74 (IAISVILFDILKGAIPMWLGY), 80-100 (PIFLGATAVFSCLGHMYPIFF), 107-127 (GVATAFGVLTTIDLHLSIVMI), 132-152 (LTVLSFGYSSLGAIVTAFIIP), and 155-175 (AWHFQSQYLLPTIIISSLVVI).

It belongs to the PlsY family. In terms of assembly, probably interacts with PlsX.

It localises to the cell inner membrane. The enzyme catalyses an acyl phosphate + sn-glycerol 3-phosphate = a 1-acyl-sn-glycero-3-phosphate + phosphate. Its pathway is lipid metabolism; phospholipid metabolism. Catalyzes the transfer of an acyl group from acyl-phosphate (acyl-PO(4)) to glycerol-3-phosphate (G3P) to form lysophosphatidic acid (LPA). This enzyme utilizes acyl-phosphate as fatty acyl donor, but not acyl-CoA or acyl-ACP. In Blochmanniella pennsylvanica (strain BPEN), this protein is Glycerol-3-phosphate acyltransferase.